The chain runs to 723 residues: Polyribonucleotide nucleotidyltransferase (723 aa).

The Mg(2+) site is built by D488 and D494. The 60-residue stretch at 555–614 (PRMITMKIHPDKIREVIGKGGSTIQALTKETGTTIDIQEDGTITIASTSTEGMAEAKRRI) folds into the KH domain. An S1 motif domain is found at 624–692 (GKIYAGTVLK…EKGRLRLSLK (69 aa)). Residues 701–723 (SISPINAGESAAPAAPAGGSEQQ) form a disordered region. A compositionally biased stretch (low complexity) spans 707–723 (AGESAAPAAPAGGSEQQ).

It belongs to the polyribonucleotide nucleotidyltransferase family. It depends on Mg(2+) as a cofactor.

It is found in the cytoplasm. It catalyses the reaction RNA(n+1) + phosphate = RNA(n) + a ribonucleoside 5'-diphosphate. Involved in mRNA degradation. Catalyzes the phosphorolysis of single-stranded polyribonucleotides processively in the 3'- to 5'-direction. The polypeptide is Polyribonucleotide nucleotidyltransferase (Cupriavidus taiwanensis (strain DSM 17343 / BCRC 17206 / CCUG 44338 / CIP 107171 / LMG 19424 / R1) (Ralstonia taiwanensis (strain LMG 19424))).